Reading from the N-terminus, the 267-residue chain is Alkaline ceramidase 3 (267 aa).

Topologically, residues 1-33 are cytoplasmic; that stretch reads MAPAADREGYWGPTTSTLDWCEENYSVTWYIAE. Ca(2+)-binding residues include Asp-19, Trp-20, Glu-22, Asn-24, and Glu-33. The chain crosses the membrane as a helical span at residues 34-55; sequence FWNTVSNLIMIIPPMFGAVQSV. At 56-61 the chain is on the lumenal side; that stretch reads RDGLEK. A helical transmembrane segment spans residues 62–82; that stretch reads RYIASYLALTVVGMGSWCFHM. His-81 provides a ligand contact to Zn(2+). Residues 83–87 lie on the Cytoplasmic side of the membrane; sequence TLKYE. The helical transmembrane segment at 88–108 threads the bilayer; that stretch reads MQLLDELPMIYSCCIFVYCMF. The Lumenal segment spans residues 109 to 118; that stretch reads ECFKIKNSVN. The helical transmembrane segment at 119–139 threads the bilayer; that stretch reads YHLLFTLVLFSLIVTTVYLKV. Topologically, residues 140-141 are cytoplasmic; that stretch reads KE. Residues 142-162 form a helical membrane-spanning segment; it reads PIFHQVMYGMLVFTLVLRSIY. Residues 163 to 173 lie on the Lumenal side of the membrane; sequence IVTWVYPWLRG. The chain crosses the membrane as a helical span at residues 174-194; sequence LGYTSLGIFLLGFLFWNIDNI. The Cytoplasmic portion of the chain corresponds to 195–215; it reads FCESLRNFRKKVPPIIGITTQ. A helical membrane pass occupies residues 216–236; that stretch reads FHAWWHILTGLGSYLHILFSL. Zn(2+) is bound by residues His-217 and His-221. Residues 237–267 lie on the Lumenal side of the membrane; the sequence is YTRTLYLRYRPKVKFLFGIWPVILFEPLRKH.

This sequence belongs to the alkaline ceramidase family. Zn(2+) is required as a cofactor. As to expression, ubiquitously expressed. Highly expressed in placenta. Expressed in erythrocytes.

It is found in the endoplasmic reticulum membrane. It localises to the golgi apparatus membrane. The catalysed reaction is an N-acyl-(4R)-4-hydroxysphinganine + H2O = (4R)-hydroxysphinganine + a fatty acid. The enzyme catalyses N-(5Z,8Z,11Z,14Z-eicosatetraenoyl)-sphing-4-enine + H2O = sphing-4-enine + (5Z,8Z,11Z,14Z)-eicosatetraenoate. It carries out the reaction N-(5Z,8Z,11Z,14Z-eicosatetraenoyl)-sphinganine + H2O = sphinganine + (5Z,8Z,11Z,14Z)-eicosatetraenoate. It catalyses the reaction N-(5Z,8Z,11Z,14Z-eicosatetraenoyl)-(4R)-hydroxysphinganine + H2O = (4R)-hydroxysphinganine + (5Z,8Z,11Z,14Z)-eicosatetraenoate. The catalysed reaction is N-(11Z-eicosenoyl)-sphing-4-enine + H2O = (11Z)-eicosenoate + sphing-4-enine. The enzyme catalyses N-(11Z-eicosenoyl)-sphinganine + H2O = (11Z)-eicosenoate + sphinganine. It carries out the reaction N-(11Z-eicosenoyl)-(4R)-hydroxysphinganine + H2O = (11Z)-eicosenoate + (4R)-hydroxysphinganine. It catalyses the reaction N-(9Z-octadecenoyl)-sphing-4-enine + H2O = sphing-4-enine + (9Z)-octadecenoate. The catalysed reaction is N-(9Z-octadecenoyl)-sphinganine + H2O = sphinganine + (9Z)-octadecenoate. The enzyme catalyses N-(9Z-octadecenoyl)-(4R)-hydroxysphinganine + H2O = (4R)-hydroxysphinganine + (9Z)-octadecenoate. It carries out the reaction an N-acylsphing-4-enine + H2O = sphing-4-enine + a fatty acid. It catalyses the reaction an N-acylsphinganine + H2O = sphinganine + a fatty acid. Its pathway is lipid metabolism; sphingolipid metabolism. Its activity is regulated as follows. Activated by 5 mM Ca(2+) and inhibited by 5 mM Zn(2+). In terms of biological role, endoplasmic reticulum and Golgi ceramidase that catalyzes the hydrolysis of unsaturated long-chain C18:1-, C20:1- and C20:4-ceramides, dihydroceramides and phytoceramides into sphingoid bases like sphingosine and free fatty acids at alkaline pH. Ceramides, sphingosine, and its phosphorylated form sphingosine-1-phosphate are bioactive lipids that mediate cellular signaling pathways regulating several biological processes including cell proliferation, apoptosis and differentiation. Controls the generation of sphingosine in erythrocytes, and thereby sphingosine-1-phosphate in plasma. Through the regulation of ceramides and sphingosine-1-phosphate homeostasis in the brain may play a role in neurons survival and function. By regulating the levels of pro-inflammatory ceramides in immune cells and tissues, may modulate the inflammatory response. This is Alkaline ceramidase 3 (ACER3) from Homo sapiens (Human).